A 558-amino-acid chain; its full sequence is C4b-binding protein alpha chain (558 aa).

The first 13 residues, 1–13 (MSLTAALWVAVFG), serve as a signal peptide directing secretion. Sushi domains follow at residues 14-74 (KCGP…ACVK), 75-136 (KSCR…ECVI), 137-201 (AKCG…TCER), 202-260 (IICP…VCEL), 261-326 (NSCT…GCKE), 327-388 (ICCP…SCHQ), 389-445 (SCDF…QCKA), and 446-503 (LCRK…RCEQ). Cystine bridges form between Cys15–Cys60, Cys45–Cys72, Cys77–Cys118, Cys104–Cys134, Cys139–Cys182, Cys168–Cys199, Cys204–Cys246, Cys232–Cys258, Cys263–Cys312, Cys296–Cys324, Cys329–Cys373, Cys363–Cys386, Cys390–Cys431, Cys417–Cys443, Cys447–Cys488, and Cys474–Cys501. Residue Asn31 is glycosylated (N-linked (GlcNAc...) asparagine). Asn177 and Asn186 each carry an N-linked (GlcNAc...) asparagine glycan. 2 N-linked (GlcNAc...) asparagine glycosylation sites follow: Asn469 and Asn491.

In terms of assembly, disulfide-linked complex of alpha and beta chains.

The protein resides in the secreted. Its function is as follows. Controls the classical pathway of complement activation. It binds as a cofactor to C3b/C4b inactivator (C3bINA), which then hydrolyzes the complement fragment C4b. It also accelerates the degradation of the C4bC2a complex (C3 convertase) by dissociating the complement fragment C2a. Alpha chain binds C4b. It also interacts with anticoagulant protein S and with serum amyloid P component. This chain is C4b-binding protein alpha chain (C4bpa), found in Rattus norvegicus (Rat).